Reading from the N-terminus, the 294-residue chain is Beta-lactamase (294 aa).

An N-terminal signal peptide occupies residues 1 to 30; that stretch reads MKHSSLRRSLLLAGITLPLVSFALPAWANA. The Acyl-ester intermediate role is filled by S75. Residue 239–241 coordinates substrate; it reads KTG.

It belongs to the class-A beta-lactamase family.

The catalysed reaction is a beta-lactam + H2O = a substituted beta-amino acid. This chain is Beta-lactamase (blaA), found in Yersinia enterocolitica.